We begin with the raw amino-acid sequence, 139 residues long: uncharacterized protein (139 aa).

One can recognise an HTH marR-type domain in the interval 8–139; sequence ANLLDHALTK…FLAIIAKLAQ (132 aa). The H-T-H motif DNA-binding region spans 53-76; the sequence is IKDILKEVTLSPSATTTALNHLEQ.

This is an uncharacterized protein from Bacillus subtilis (strain 168).